The chain runs to 424 residues: Enolase (424 aa).

Residue Q162 participates in (2R)-2-phosphoglycerate binding. E204 serves as the catalytic Proton donor. Residues D241, E284, and D311 each coordinate Mg(2+). Residues K336, R365, S366, and K387 each coordinate (2R)-2-phosphoglycerate. K336 functions as the Proton acceptor in the catalytic mechanism.

Belongs to the enolase family. The cofactor is Mg(2+).

The protein localises to the cytoplasm. It localises to the secreted. It is found in the cell surface. It carries out the reaction (2R)-2-phosphoglycerate = phosphoenolpyruvate + H2O. It participates in carbohydrate degradation; glycolysis; pyruvate from D-glyceraldehyde 3-phosphate: step 4/5. Functionally, catalyzes the reversible conversion of 2-phosphoglycerate (2-PG) into phosphoenolpyruvate (PEP). It is essential for the degradation of carbohydrates via glycolysis. The chain is Enolase from Rhizobium leguminosarum bv. trifolii (strain WSM2304).